Consider the following 409-residue polypeptide: Arginine deiminase (409 aa).

Cys-399 functions as the Amidino-cysteine intermediate in the catalytic mechanism.

The protein belongs to the arginine deiminase family.

Its subcellular location is the cytoplasm. The catalysed reaction is L-arginine + H2O = L-citrulline + NH4(+). The protein operates within amino-acid degradation; L-arginine degradation via ADI pathway; carbamoyl phosphate from L-arginine: step 1/2. This Borrelia recurrentis (strain A1) protein is Arginine deiminase.